A 279-amino-acid chain; its full sequence is Prostatic spermine-binding protein (279 aa).

The first 17 residues, 1 to 17 (MLLLVTLALLAGPTCRA), serve as a signal peptide directing secretion. Residue glutamine 18 is modified to Pyrrolidone carboxylic acid. One can recognise a Jacalin-type lectin domain in the interval 18–151 (QNILGNNVGT…LNGMGFKWKN (134 aa)). The N-linked (GlcNAc...) asparagine glycan is linked to asparagine 62. Acidic residues-rich tracts occupy residues 160 to 177 (DDDK…NEED) and 185 to 279 (NDHD…EEEE). The disordered stretch occupies residues 160 to 279 (DDDKEDDDDE…DDDNGDEEEE (120 aa)).

To mouse SBP. In terms of tissue distribution, prostate.

Spermine-binding protein is an androgen regulated ventral prostate glycoprotein that binds various polyamines. This chain is Prostatic spermine-binding protein (Sbp), found in Rattus norvegicus (Rat).